The chain runs to 387 residues: Zinc homeostasis factor 1 (387 aa).

Transmembrane regions (helical) follow at residues 10-30, 34-54, 77-97, and 113-133; these read IILL…TGYA, LALI…LVAL, EILG…FIFM, and TLMF…IFLF. The segment covering 195–214 has biased composition (polar residues); sequence SYTGNHNGAGTSKPVNNHGS. The segment at 195 to 221 is disordered; the sequence is SYTGNHNGAGTSKPVNNHGSIEQDAPK. 2 consecutive transmembrane segments (helical) span residues 234–254 and 263–283; these read FLHV…ALFI and FLFD…SAIP.

This sequence belongs to the cation diffusion facilitator (CDF) transporter (TC 2.A.4) family. SLC30A subfamily.

The protein resides in the endoplasmic reticulum membrane. It localises to the nucleus membrane. Its function is as follows. Involved in zinc homeostasis, where it plays a role in its accumulation in the endoplasmic reticulum/nucleus. Also has a role in the sequestration of cadmium into the endoplasmic reticulum. This chain is Zinc homeostasis factor 1 (zhf1), found in Schizosaccharomyces pombe (strain 972 / ATCC 24843) (Fission yeast).